Reading from the N-terminus, the 626-residue chain is Serine/threonine-protein kinase ATG1a (626 aa).

One can recognise a Protein kinase domain in the interval 10-268; that stretch reads YALGPRIGSG…FREFFNHMFL (259 aa). ATP-binding positions include 16 to 24 and Lys39; that span reads IGSGSFAVV. The Proton acceptor role is filled by Asp132. Residues 288–308 are compositionally biased toward polar residues; the sequence is KSLLPSAQPSTSTNRFKSSAE. Residues 288-347 are disordered; it reads KSLLPSAQPSTSTNRFKSSAENVHKHGSSSSASNSQISMPHTSFEKTRKDTEGQCSSNQS. Low complexity predominate over residues 315 to 325; sequence SSSSASNSQIS. Residues 330–339 are compositionally biased toward basic and acidic residues; that stretch reads SFEKTRKDTE. The AIM (Atg8-family-interacting motif) signature appears at 360 to 363; the sequence is YVLV.

This sequence belongs to the protein kinase superfamily. Ser/Thr protein kinase family. Interacts with ATG13A. Interacts with ATG8E. Binds to ATG8E on autophagic vesicles. In terms of processing, phosphorylated during nutrient starvation. Dephosphorylated in nutrient-rich conditions.

Its subcellular location is the cytoplasmic vesicle. It localises to the autophagosome. Serine/threonine protein kinase involved in autophagy in a nutritional condition-dependent manner. The ATG1-ATG13 protein kinase complex regulates downstream events required for autophagosome enclosure and/or vacuolar delivery. Becomes a target of autophagy under nutrient starvation. Connects autophagy to plant nutritional status. This is Serine/threonine-protein kinase ATG1a from Arabidopsis thaliana (Mouse-ear cress).